Reading from the N-terminus, the 269-residue chain is Tryptophan synthase alpha chain (269 aa).

Active-site proton acceptor residues include Glu-45 and Asp-56.

The protein belongs to the TrpA family. In terms of assembly, tetramer of two alpha and two beta chains.

It catalyses the reaction (1S,2R)-1-C-(indol-3-yl)glycerol 3-phosphate + L-serine = D-glyceraldehyde 3-phosphate + L-tryptophan + H2O. Its pathway is amino-acid biosynthesis; L-tryptophan biosynthesis; L-tryptophan from chorismate: step 5/5. Its function is as follows. The alpha subunit is responsible for the aldol cleavage of indoleglycerol phosphate to indole and glyceraldehyde 3-phosphate. The polypeptide is Tryptophan synthase alpha chain (Shouchella clausii (strain KSM-K16) (Alkalihalobacillus clausii)).